Reading from the N-terminus, the 448-residue chain is Antizyme inhibitor 1 (448 aa).

Belongs to the Orn/Lys/Arg decarboxylase class-II family. ODC antizyme inhibitor subfamily. In terms of assembly, monomer. Interacts with OAZ1 and OAZ3; this interaction disrupts the interaction between the antizyme and ODC1. Ubiquitinated, leading to its proteasomal degradation; a process that is reduced in presence of antizyme OAZ1. Expressed in various tissues including liver, heart and kidney.

It localises to the nucleus. Antizyme inhibitor (AZI) protein that positively regulates ornithine decarboxylase (ODC) activity and polyamine uptake. AZI is an enzymatically inactive ODC homolog that counteracts the negative effect of ODC antizymes (AZs) OAZ1, OAZ2 and OAZ3 on ODC activity by competing with ODC for antizyme-binding. Inhibits antizyme-dependent ODC degradation and releases ODC monomers from their inactive complex with antizymes, leading to formation of the catalytically active ODC homodimer and restoring polyamine production. The chain is Antizyme inhibitor 1 (Azin1) from Rattus norvegicus (Rat).